The following is a 556-amino-acid chain: Genetic interactor of prohibitins 3, mitochondrial (556 aa).

A mitochondrion-targeting transit peptide spans M1 to K21. The region spanning E113–S305 is the CP-type G domain.

This sequence belongs to the TRAFAC class YlqF/YawG GTPase family. GEP3 subfamily.

The protein resides in the mitochondrion. Functionally, interacts genetically with prohibitins and thus may be involved in the mitochondrial lipid metabolism. This is Genetic interactor of prohibitins 3, mitochondrial (GEP3) from Saccharomyces cerevisiae (strain AWRI1631) (Baker's yeast).